The chain runs to 110 residues: Nucleotide-binding protein in fmt 3'region (110 aa).

8–15 (GLSGAGKT) is a binding site for ATP. 57–60 (DARA) is a binding site for GTP.

Belongs to the RapZ-like family.

In terms of biological role, displays ATPase and GTPase activities. This Thermus thermophilus protein is Nucleotide-binding protein in fmt 3'region.